A 1225-amino-acid polypeptide reads, in one-letter code: Catenin delta-2 (1225 aa).

Disordered regions lie at residues 1-51, 87-117, 134-242, and 256-312; these read MFAR…TSAI, SETG…EDEL, SGIL…HLPD, and SSTL…KSYS. Polar residues-rich tracts occupy residues 20–51 and 98–108; these read QPSS…TSAI and AEEQFQWQSQD. The stretch at 49-84 forms a coiled coil; it reads SAILASVKEQELQFERLTRELEAERQIVASQLERCK. The segment covering 149-160 has biased composition (low complexity); that stretch reads SLLSQSALQLNS. Composition is skewed to polar residues over residues 172–187 and 195–209; these read YHSN…TPSQ and ARAT…TTSR. Arginine 209 carries the omega-N-methylarginine modification. The segment covering 217–229 has biased composition (pro residues); the sequence is EPAPPPPPPPREP. Position 264 is an omega-N-methylarginine (arginine 264). A phosphoserine mark is found at serine 267 and serine 276. Omega-N-methylarginine is present on residues arginine 282 and arginine 296. Residues 299-312 are compositionally biased toward polar residues; sequence SPKQSPSRLAKSYS. Phosphoserine occurs at positions 327, 360, 415, and 461. The ARM 1 repeat unit spans residues 394–438; it reads GSRASYSSQHGHLGPELRALQSPEHHIDPIYEDRVYQKPPMRSLS. Disordered stretches follow at residues 432-483 and 514-542; these read PPMR…NAAA and SPYS…QKDP. Residues 469–478 are compositionally biased toward polar residues; it reads LQRTGSQHGP. Serine 514 bears the Phosphoserine mark. Residue tyrosine 516 is modified to Phosphotyrosine. ARM repeat units follow at residues 540-579, 582-621, 626-666, 682-724, 728-773, 835-875, 882-921, and 975-1018; these read KDPR…HLCF, NKIK…NLVY, DDNK…NLSS, LTNA…NVSS, EARR…NLSY, PKGI…NLAA, VYIR…NMAL, and MENA…SMWQ. The tract at residues 1042-1077 is disordered; the sequence is TIERDRQRPYSSSRTPSISPVRVSPNNRSASAPASP. Residues 1050-1059 are compositionally biased toward polar residues; it reads PYSSSRTPSI. Phosphoserine is present on residues serine 1065 and serine 1076. Positions 1065-1077 are enriched in low complexity; it reads SPNNRSASAPASP.

Belongs to the beta-catenin family. Binds to E-cadherin at a juxtamembrane site within the cytoplasmic domain. Interacts with PDZD2. Interacts with ZBTB33. Binds to PSEN1. Interacts with ARHGEF28. Interacts (via the extreme C-terminus) with FRMPD2 (via the PDZ 2 domain). Interacts with CDK5. Interacts with CTNNB1. Interacts with GSK3A and GSK3B. Interacts with DNM2. Interacts with CCDC85B. O-glycosylated. Post-translationally, phosphorylated by CDK5. Phosphorylated by GSK3B. Expressed in brain; highest expression is observed in fetal brain.

The protein localises to the nucleus. The protein resides in the cell junction. It is found in the adherens junction. It localises to the cell projection. Its subcellular location is the dendrite. The protein localises to the perikaryon. Functionally, has a critical role in neuronal development, particularly in the formation and/or maintenance of dendritic spines and synapses. Involved in the regulation of Wnt signaling. It probably acts on beta-catenin turnover, facilitating beta-catenin interaction with GSK3B, phosphorylation, ubiquitination and degradation. Functions as a transcriptional activator when bound to ZBTB33. May be involved in neuronal cell adhesion and tissue morphogenesis and integrity by regulating adhesion molecules. The protein is Catenin delta-2 (CTNND2) of Homo sapiens (Human).